The sequence spans 352 residues: tRNA(Ile)-lysidine synthase (352 aa).

58 to 63 (SGGADS) is an ATP binding site.

Belongs to the tRNA(Ile)-lysidine synthase family.

The protein localises to the cytoplasm. The catalysed reaction is cytidine(34) in tRNA(Ile2) + L-lysine + ATP = lysidine(34) in tRNA(Ile2) + AMP + diphosphate + H(+). Its function is as follows. Ligates lysine onto the cytidine present at position 34 of the AUA codon-specific tRNA(Ile) that contains the anticodon CAU, in an ATP-dependent manner. Cytidine is converted to lysidine, thus changing the amino acid specificity of the tRNA from methionine to isoleucine. The chain is tRNA(Ile)-lysidine synthase from Streptomyces coelicolor (strain ATCC BAA-471 / A3(2) / M145).